The sequence spans 285 residues: NAD kinase (285 aa).

The active-site Proton acceptor is Asp76. NAD(+) is bound by residues 76-77, 151-152, His162, Arg179, Asp181, 192-197, and Gln252; these read DG, NE, and TAYSLS.

It belongs to the NAD kinase family. The cofactor is a divalent metal cation.

Its subcellular location is the cytoplasm. The enzyme catalyses NAD(+) + ATP = ADP + NADP(+) + H(+). Its function is as follows. Involved in the regulation of the intracellular balance of NAD and NADP, and is a key enzyme in the biosynthesis of NADP. Catalyzes specifically the phosphorylation on 2'-hydroxyl of the adenosine moiety of NAD to yield NADP. This chain is NAD kinase, found in Haemophilus influenzae (strain ATCC 51907 / DSM 11121 / KW20 / Rd).